A 2731-amino-acid chain; its full sequence is Putative mediator of RNA polymerase II transcription subunit 12 (2731 aa).

Coiled coils occupy residues 5-37 (QQIL…QQQQ), 75-108 (HIQQ…QQVH), 141-189 (QQIH…QQQQ), and 275-304 (IQQL…QQQQ). Disordered stretches follow at residues 29–57 (QQQM…HMIH) and 101–145 (QQQQ…QIHQ). The span at 310 to 320 (QPQQQQQQQQP) shows a compositional bias: low complexity. 4 disordered regions span residues 310 to 376 (QPQQ…DDKS), 432 to 451 (TQKS…RPVP), 685 to 708 (LGHG…QQPQ), and 1251 to 1341 (RNNN…QQKS). Polar residues predominate over residues 327-337 (QNPSYHSQSQI). The span at 347 to 361 (KKYEIQKPADKKELG) shows a compositional bias: basic and acidic residues. Over residues 688–701 (GHGHGHGHHSHSHS) the composition is skewed to basic residues. Positions 1251 to 1268 (RNNNNNNKNKNNNKQSNN) are enriched in low complexity. Acidic residues-rich tracts occupy residues 1275-1298 (NGEE…DNDE) and 1305-1326 (NDNE…DDQM). 2 coiled-coil regions span residues 1316 to 1344 (EDED…SNEN) and 1375 to 1433 (KLKK…DEEL). Disordered stretches follow at residues 1778-1825 (HDDN…NNNG), 1892-1958 (TQSS…NNTT), 2212-2258 (SSSS…NNVK), 2307-2351 (TSSV…QQQQ), 2472-2532 (EIEK…KPQT), and 2705-2731 (HQQI…NNYK). Composition is skewed to low complexity over residues 1783–1824 (ENNN…NNNN), 1892–1909 (TQSS…QSPT), 1916–1958 (NSTN…NNTT), 2212–2250 (SSSS…QQQQ), 2307–2322 (TSSV…STTS), 2337–2351 (QQQT…QQQQ), 2472–2501 (EIEK…HQQL), 2508–2532 (LQQQ…KPQT), and 2705–2720 (HQQI…HQQQ). Residues 2239-2270 (TNQQQQQQQQQQADQKNNVKKKLHELYQKIKS) are a coiled coil. The stretch at 2336-2363 (LQQQTSQQQQQQQQQQQQQSQQHQQQQQ) forms a coiled coil. Residues 2523-2662 (QQLQQQKPQT…QQQQQQLQQL (140 aa)) are a coiled coil. The span at 2721-2731 (KCSTTKYNNYK) shows a compositional bias: polar residues.

This sequence belongs to the Mediator complex subunit 12 family. Component of the Mediator complex.

The protein localises to the nucleus. Functionally, component of the Mediator complex, a coactivator involved in the regulated transcription of nearly all RNA polymerase II-dependent genes. Mediator functions as a bridge to convey information from gene-specific regulatory proteins to the basal RNA polymerase II transcription machinery. Mediator is recruited to promoters by direct interactions with regulatory proteins and serves as a scaffold for the assembly of a functional preinitiation complex with RNA polymerase II and the general transcription factors. This is Putative mediator of RNA polymerase II transcription subunit 12 (med12) from Dictyostelium discoideum (Social amoeba).